The chain runs to 213 residues: MFQPYTLEEGRYLVKLARSVVEAYLTHGKIVIPENPPPRLINDNYGVFTTIETVQGEKFELRGCIGYPEGYKNTLYATIYSAIGACCQDPRFPAMRREELNSVVFEVSILSPLTLLDDDPRKYLELVQVGRHGLVVKRGPYSGLLLPQVAVEECWSTEEFLIHTCVKAWLPGDCWLDRRTKLYIYEAQIFREREPNEEVYQRDLLGELAKCRK.

The region spanning 8–201 (EEGRYLVKLA…EREPNEEVYQ (194 aa)) is the AMMECR1 domain.

The polypeptide is Protein Pars_0011 (Pyrobaculum arsenaticum (strain DSM 13514 / JCM 11321 / PZ6)).